Reading from the N-terminus, the 171-residue chain is Putative auxin-responsive protein IAA29 (171 aa).

Positions 19–114 (SRFVKVFMHG…TVKKIYIVPA (96 aa)) constitute a PB1 domain. Positions 117 to 171 (QNENDYQEEEEDNAAAAATADEDGDGAAADDGVAAAADDVDDVAGYTSNDDPSFD) are disordered. Positions 142–153 (GAAADDGVAAAA) are enriched in low complexity. The segment covering 162–171 (YTSNDDPSFD) has biased composition (polar residues).

Belongs to the Aux/IAA family. In terms of assembly, homodimers and heterodimers.

It is found in the nucleus. In terms of biological role, aux/IAA proteins are short-lived transcriptional factors that function as repressors of early auxin response genes at low auxin concentrations. The sequence is that of Putative auxin-responsive protein IAA29 (IAA29) from Oryza sativa subsp. japonica (Rice).